Here is a 286-residue protein sequence, read N- to C-terminus: KH domain-containing protein At2g38610 (286 aa).

N-acetylserine is present on serine 2. In terms of domain architecture, KH spans 141-208; it reads EIPVDNYPNF…EHLNEQLHIL (68 aa). Positions 256 to 286 are disordered; it reads SNNLREESPGPSGGGSVSPFNSSGKRPKTGC. Phosphoserine occurs at positions 263 and 273.

It is found in the nucleus. The chain is KH domain-containing protein At2g38610 from Arabidopsis thaliana (Mouse-ear cress).